Consider the following 431-residue polypeptide: Protein S-Myc (431 aa).

Position 36 is a phosphotyrosine; by Tyr-kinases (Tyr36). A bHLH domain is found at 348–400 (ERRRNHNRMERQRRDIMRSSFLNLRDLVPELVHNEKAAKVVILKKATEYIHTL). The tract at residues 400 to 421 (LQADESKLLVERKKLYERQQQL) is leucine-zipper.

As to quaternary structure, efficient DNA binding requires dimerization with another bHLH protein.

It is found in the nucleus. Has apoptosis-inducing activity. The polypeptide is Protein S-Myc (Mycs) (Mus musculus (Mouse)).